The chain runs to 263 residues: Glutamate racemase (263 aa).

Substrate is bound by residues 12–13 and 44–45; these read DS and YG. Residue C75 is the Proton donor/acceptor of the active site. Position 76–77 (76–77) interacts with substrate; it reads NT. C186 (proton donor/acceptor) is an active-site residue. Residue 187–188 coordinates substrate; sequence TH.

Belongs to the aspartate/glutamate racemases family.

The enzyme catalyses L-glutamate = D-glutamate. It functions in the pathway cell wall biogenesis; peptidoglycan biosynthesis. Provides the (R)-glutamate required for cell wall biosynthesis. The polypeptide is Glutamate racemase (Ectopseudomonas mendocina (strain ymp) (Pseudomonas mendocina)).